We begin with the raw amino-acid sequence, 299 residues long: Elongation factor Ts, mitochondrial (299 aa).

The transit peptide at 1–18 (MLFQRRLHFHQFFGKTRV) directs the protein to the mitochondrion.

The protein belongs to the EF-Ts family.

Its subcellular location is the mitochondrion. In terms of biological role, associates with the EF-Tu.GDP complex and induces the exchange of GDP to GTP. It remains bound to the aminoacyl-tRNA.EF-Tu.GTP complex up to the GTP hydrolysis stage on the ribosome. This chain is Elongation factor Ts, mitochondrial (tsf1), found in Schizosaccharomyces pombe (strain 972 / ATCC 24843) (Fission yeast).